We begin with the raw amino-acid sequence, 414 residues long: Dual-specificity RNA methyltransferase RlmN (414 aa).

Low complexity predominate over residues 1–20 (MMSTPETATEATAPEAAPAP). Residues 1–24 (MMSTPETATEATAPEAAPAPSLGA) are disordered. Glu-129 functions as the Proton acceptor in the catalytic mechanism. The 251-residue stretch at 135–385 (ESDRGTLCVS…VRTPRGRDIL (251 aa)) folds into the Radical SAM core domain. Cys-142 and Cys-388 are disulfide-bonded. Positions 149, 153, and 156 each coordinate [4Fe-4S] cluster. S-adenosyl-L-methionine is bound by residues 214–215 (GE), Ser-246, 268–270 (SLH), and Asn-345. The active-site S-methylcysteine intermediate is Cys-388.

Belongs to the radical SAM superfamily. RlmN family. [4Fe-4S] cluster is required as a cofactor.

The protein resides in the cytoplasm. It carries out the reaction adenosine(2503) in 23S rRNA + 2 reduced [2Fe-2S]-[ferredoxin] + 2 S-adenosyl-L-methionine = 2-methyladenosine(2503) in 23S rRNA + 5'-deoxyadenosine + L-methionine + 2 oxidized [2Fe-2S]-[ferredoxin] + S-adenosyl-L-homocysteine. The enzyme catalyses adenosine(37) in tRNA + 2 reduced [2Fe-2S]-[ferredoxin] + 2 S-adenosyl-L-methionine = 2-methyladenosine(37) in tRNA + 5'-deoxyadenosine + L-methionine + 2 oxidized [2Fe-2S]-[ferredoxin] + S-adenosyl-L-homocysteine. In terms of biological role, specifically methylates position 2 of adenine 2503 in 23S rRNA and position 2 of adenine 37 in tRNAs. m2A2503 modification seems to play a crucial role in the proofreading step occurring at the peptidyl transferase center and thus would serve to optimize ribosomal fidelity. The polypeptide is Dual-specificity RNA methyltransferase RlmN (Xanthobacter autotrophicus (strain ATCC BAA-1158 / Py2)).